Reading from the N-terminus, the 226-residue chain is UPF0173 metal-dependent hydrolase CHY_0920 (226 aa).

It belongs to the UPF0173 family.

The protein is UPF0173 metal-dependent hydrolase CHY_0920 of Carboxydothermus hydrogenoformans (strain ATCC BAA-161 / DSM 6008 / Z-2901).